A 285-amino-acid chain; its full sequence is 3',5'-nucleoside bisphosphate phosphatase (285 aa).

Residues His-7, His-9, Asp-14, His-39, Glu-64, and His-75 each contribute to the Mn(2+) site. Positions 14 and 39 each coordinate substrate. Residues 99–102 (RLER) and 134–135 (RT) contribute to the substrate site. Positions 191, 248, and 250 each coordinate Mn(2+). His-250 is a substrate binding site.

Belongs to the PHP family. As to quaternary structure, monomer. Requires Mn(2+) as cofactor.

The enzyme catalyses a ribonucleoside 3',5'-bisphosphate + H2O = a ribonucleoside 5'-phosphate + phosphate. Functionally, hydrolyzes 3',5'-bisphosphonucleosides (pGp, pCp, pUp, and pIp) to nucleoside 5'-phosphate and orthophosphate. Has similar catalytic efficiencies with all the bases. Also shows activity with ribonucleoside 2'-deoxyribonucleoside 3',5'-bisphosphates. Does not show activity with nucleoside 2',5'-bisphosphates. The polypeptide is 3',5'-nucleoside bisphosphate phosphatase (Chromobacterium violaceum (strain ATCC 12472 / DSM 30191 / JCM 1249 / CCUG 213 / NBRC 12614 / NCIMB 9131 / NCTC 9757 / MK)).